Consider the following 84-residue polypeptide: Large ribosomal subunit protein bL27 (84 aa).

A disordered region spans residues 1–20; sequence MAHKKSGGASRNGRDSNPKY.

This sequence belongs to the bacterial ribosomal protein bL27 family.

The protein is Large ribosomal subunit protein bL27 of Dictyoglomus thermophilum (strain ATCC 35947 / DSM 3960 / H-6-12).